The primary structure comprises 856 residues: Beta-galactosidase 3 (856 aa).

The signal sequence occupies residues 1–31 (MREMGTGDSASRLILWFCLGFLILGVGFVQC). The active-site Proton donor is the Glu-189. The Nucleophile role is filled by Glu-258. Asn-468 carries an N-linked (GlcNAc...) asparagine glycan. Positions 760–846 (TFHRPKVHLK…KRLTVEAVCA (87 aa)) constitute an SUEL-type lectin domain.

The protein belongs to the glycosyl hydrolase 35 family. As to expression, ubiquitous.

It localises to the secreted. The protein resides in the extracellular space. It is found in the apoplast. The catalysed reaction is Hydrolysis of terminal non-reducing beta-D-galactose residues in beta-D-galactosides.. The sequence is that of Beta-galactosidase 3 (BGAL3) from Arabidopsis thaliana (Mouse-ear cress).